The sequence spans 255 residues: TIR domain-containing protein (255 aa).

A TIR domain is found at 9-185; sequence LSDQVFINFR…DIVKEVKKQL (177 aa). E83 is a catalytic residue. 2 consecutive transmembrane segments (helical) span residues 195–215 and 223–243; these read AIGV…FIAP and FFQT…SWFW. The KASH domain occupies 201–255; that stretch reads LAITINLIFSFFIAPKYLPDQKFFQTPEWFIGTLAVVLASWFWYKNNQNKAPPPS.

Forms homomers. Interacts with SUN1, SUN2, SUN3, SUN4 and SUN5.

It is found in the nucleus membrane. It catalyses the reaction NAD(+) + H2O = ADP-D-ribose + nicotinamide + H(+). In terms of biological role, could play a role in nuclear morphology, specifically nuclear size. The protein is TIR domain-containing protein of Arabidopsis thaliana (Mouse-ear cress).